The following is a 2419-amino-acid chain: Telomere-associated protein RIF1 (2419 aa).

2 disordered regions span residues 1–24 (MTAP…VPPG) and 373–408 (SIPS…SPRG). Positions 373–385 (SIPSPQGNSSRGS) are enriched in polar residues. 5 positions are modified to phosphoserine: S385, S391, S779, S976, and S1005. T1044 carries the phosphothreonine modification. Low complexity predominate over residues 1184–1198 (SSSTETSVVSSSSVS). Disordered stretches follow at residues 1184–1594 (SSST…QAVP) and 1613–1637 (RVIL…EKSK). Polar residues-rich tracts occupy residues 1199–1217 (NATF…QTFI) and 1228–1255 (RPFS…TNTD). At T1215 the chain carries Phosphothreonine. Residues S1231 and S1233 each carry the phosphoserine modification. Residues 1263 to 1272 (REVTNSKSDS) are compositionally biased toward basic and acidic residues. Positions 1289-1302 (AEQSVTKKSKPSLT) are enriched in polar residues. Residues 1323–1345 (HVSENDDHPSEATLEHKDGDPKP) are compositionally biased toward basic and acidic residues. Residues S1407, S1439, S1457, and S1498 each carry the phosphoserine modification. Positions 1416–1455 (SQERESGQQKKERRKEEEKIISKSPLRIKDDKLPTQKLTD) are enriched in basic and acidic residues. Over residues 1457-1467 (SPIQENLTEKG) the composition is skewed to polar residues. Position 1504 is a phosphothreonine (T1504). Residues 1507-1516 (NLDKSSEKPL) are compositionally biased toward basic and acidic residues. Over residues 1525–1537 (RRASQGLISAVEN) the composition is skewed to polar residues. Phosphoserine occurs at positions 1528, 1538, 1540, 1542, and 1550. The span at 1551–1560 (RKKRSGKWKN) shows a compositional bias: basic residues. A phosphoserine mark is found at S1562 and S1565. Positions 1572 to 1581 (EEKKAEEEVM) are enriched in basic and acidic residues. Phosphoserine is present on residues S1680 and S1683. T1780 carries the phosphothreonine modification. Phosphoserine is present on S1784. The disordered stretch occupies residues 1812-1836 (ASEAVSEIQGPCSENHSPAEDPGLS). At S1842 the chain carries Phosphoserine. Positions 1882–2419 (DAFVAADSEK…RWRSPAHENS (538 aa)) are interaction with condensed chromosomes in telophase. 2 disordered regions span residues 1890-1914 (EKST…ECEA) and 1929-1983 (FNSG…AQMS). S1931, S2094, S2109, S2121, S2125, S2144, S2153, S2208, S2287, S2341, S2413, and S2419 each carry phosphoserine. The tract at residues 2119–2394 (VWSPLASPST…TGSQLFEMHE (276 aa)) is interaction with ERCC6. Residues 2182–2212 (SPIIKSVKTSPTSHSKHNTTSAKGFLSPGSQ) form a disordered region. Positions 2189 to 2212 (KTSPTSHSKHNTTSAKGFLSPGSQ) are enriched in polar residues.

Belongs to the RIF1 family. In terms of assembly, interacts with TP53BP1 (when phosphorylated by ATM). May interact with TRF2. Interacts with SHLD2. Interacts with ERCC6 (via WHD region). Interacts with ASTE1. Expressed in Sertoli cells, prospermatagonia, early primary spermatocytes, and in oocytes at all stages of their growth. Expressed in embryonic stem (ES) and embryonic germ (EG) cells: expression is lost upon differentiation.

It localises to the nucleus. It is found in the chromosome. The protein resides in the telomere. The protein localises to the cytoplasm. Its subcellular location is the cytoskeleton. It localises to the spindle. Key regulator of TP53BP1 that plays a key role in the repair of double-strand DNA breaks (DSBs) in response to DNA damage: acts by promoting non-homologous end joining (NHEJ)-mediated repair of DSBs. In response to DNA damage, interacts with ATM-phosphorylated TP53BP1. Interaction with TP53BP1 leads to dissociate the interaction between NUDT16L1/TIRR and TP53BP1, thereby unmasking the tandem Tudor-like domain of TP53BP1 and allowing recruitment to DNA DSBs. Once recruited to DSBs, RIF1 and TP53BP1 act by promoting NHEJ-mediated repair of DSBs. In the same time, RIF1 and TP53BP1 specifically counteract the function of BRCA1 by blocking DSBs resection via homologous recombination (HR) during G1 phase. Also required for immunoglobulin class-switch recombination (CSR) during antibody genesis, a process that involves the generation of DNA DSBs. Promotes NHEJ of dysfunctional telomeres. In Mus musculus (Mouse), this protein is Telomere-associated protein RIF1.